We begin with the raw amino-acid sequence, 388 residues long: Diacylglycerol O-acyltransferase 2 (388 aa).

The Cytoplasmic segment spans residues 1-69 (MKTLIAAYSG…NRSKVEKQLQ (69 aa)). The chain crosses the membrane as a helical span at residues 70–88 (VISVLQWVLSFLVLGVACS). The Lumenal segment spans residues 89–92 (VILM). Residues 93 to 112 (YTFCTDCWLIAVLYFTWLAF) traverse the membrane as a helical segment. Topologically, residues 113–388 (DWNTPKKGGR…LPETEVLEVN (276 aa)) are cytoplasmic.

This sequence belongs to the diacylglycerol acyltransferase family. Forms multimeric complexes consisting of several DGAT2 subunits. Interacts with SLC27A1 and this interaction is enhanced in the presence of ZFYVE1. As to expression, predominantly expressed in liver. Also expressed in testis.

It localises to the endoplasmic reticulum membrane. Its subcellular location is the lipid droplet. The protein localises to the cytoplasm. The protein resides in the perinuclear region. The enzyme catalyses an acyl-CoA + a 1,2-diacyl-sn-glycerol = a triacyl-sn-glycerol + CoA. The catalysed reaction is all-trans-retinol + an acyl-CoA = an all-trans-retinyl ester + CoA. It catalyses the reaction 1,2-di-(9Z-octadecenoyl)-sn-glycerol + hexadecanoyl-CoA = 1,2-di-(9Z)-octadecenoyl-3-hexadecanoyl-sn-glycerol + CoA. It carries out the reaction 1,2-di-(9Z-octadecenoyl)-sn-glycerol + (9Z)-octadecenoyl-CoA = 1,2,3-tri-(9Z-octadecenoyl)-glycerol + CoA. The enzyme catalyses 1,3-di-(9Z-octadecenoyl)-glycerol + (9Z)-octadecenoyl-CoA = 1,2,3-tri-(9Z-octadecenoyl)-glycerol + CoA. The catalysed reaction is 2,3-di-(9Z)-octadecenoyl-sn-glycerol + (9Z)-octadecenoyl-CoA = 1,2,3-tri-(9Z-octadecenoyl)-glycerol + CoA. It catalyses the reaction 2-(9Z-octadecenoyl)-glycerol + hexadecanoyl-CoA = 1-hexadecanoyl-2-(9Z-octadecenoyl)-sn-glycerol + CoA. It carries out the reaction 2-(9Z-octadecenoyl)-glycerol + (9Z)-octadecenoyl-CoA = 1,2-di-(9Z-octadecenoyl)-sn-glycerol + CoA. The enzyme catalyses all-trans-retinol + hexadecanoyl-CoA = all-trans-retinyl hexadecanoate + CoA. The catalysed reaction is 1-O-(9Z-octadecenyl)-glycerol + (9Z)-octadecenoyl-CoA = 1-O-(9Z-octadecyl)-3-(9Z-octadecenoyl)-glycerol + CoA. It catalyses the reaction 1-(9Z-octadecenoyl)-glycerol + (9Z)-octadecenoyl-CoA = 1,2-di-(9Z-octadecenoyl)-glycerol + CoA. It functions in the pathway glycerolipid metabolism; triacylglycerol biosynthesis. Its activity is regulated as follows. Inhibited by niacin. Its function is as follows. Essential acyltransferase that catalyzes the terminal and only committed step in triacylglycerol synthesis by using diacylglycerol and fatty acyl CoA as substrates. Required for synthesis and storage of intracellular triglycerides. Probably plays a central role in cytosolic lipid accumulation. In liver, is primarily responsible for incorporating endogenously synthesized fatty acids into triglycerides. Also functions as an acyl-CoA retinol acyltransferase (ARAT). Also able to use 1-monoalkylglycerol (1-MAkG) as an acyl acceptor for the synthesis of monoalkyl-monoacylglycerol (MAMAG). The chain is Diacylglycerol O-acyltransferase 2 from Mus musculus (Mouse).